We begin with the raw amino-acid sequence, 455 residues long: Argininosuccinate lyase (455 aa).

Belongs to the lyase 1 family. Argininosuccinate lyase subfamily.

Its subcellular location is the cytoplasm. The catalysed reaction is 2-(N(omega)-L-arginino)succinate = fumarate + L-arginine. The protein operates within amino-acid biosynthesis; L-arginine biosynthesis; L-arginine from L-ornithine and carbamoyl phosphate: step 3/3. The chain is Argininosuccinate lyase from Shewanella sp. (strain MR-7).